The sequence spans 232 residues: Zinc import ATP-binding protein ZnuC (232 aa).

Positions 5–220 (VNLKNIFVFY…PSFIEMFGCY (216 aa)) constitute an ABC transporter domain. Residue 37–44 (GPNGSGKS) coordinates ATP.

Belongs to the ABC transporter superfamily. Zinc importer (TC 3.A.1.15.5) family. As to quaternary structure, the complex is composed of two ATP-binding proteins (ZnuC), two transmembrane proteins (ZnuB) and a solute-binding protein (ZnuA).

The protein resides in the cell membrane. It catalyses the reaction Zn(2+)(out) + ATP(in) + H2O(in) = Zn(2+)(in) + ADP(in) + phosphate(in) + H(+)(in). Part of the ABC transporter complex ZnuABC involved in zinc import. Responsible for energy coupling to the transport system. This chain is Zinc import ATP-binding protein ZnuC, found in Wigglesworthia glossinidia brevipalpis.